Reading from the N-terminus, the 313-residue chain is Porphobilinogen deaminase (313 aa).

Cys242 is subject to S-(dipyrrolylmethanemethyl)cysteine.

This sequence belongs to the HMBS family. As to quaternary structure, monomer. Dipyrromethane is required as a cofactor.

It catalyses the reaction 4 porphobilinogen + H2O = hydroxymethylbilane + 4 NH4(+). It functions in the pathway porphyrin-containing compound metabolism; protoporphyrin-IX biosynthesis; coproporphyrinogen-III from 5-aminolevulinate: step 2/4. Functionally, tetrapolymerization of the monopyrrole PBG into the hydroxymethylbilane pre-uroporphyrinogen in several discrete steps. The protein is Porphobilinogen deaminase of Pseudomonas syringae pv. tomato (strain ATCC BAA-871 / DC3000).